The primary structure comprises 265 residues: Tryptophan synthase alpha chain (265 aa).

Residues E50 and D61 each act as proton acceptor in the active site.

It belongs to the TrpA family. In terms of assembly, tetramer of two alpha and two beta chains.

It carries out the reaction (1S,2R)-1-C-(indol-3-yl)glycerol 3-phosphate + L-serine = D-glyceraldehyde 3-phosphate + L-tryptophan + H2O. The protein operates within amino-acid biosynthesis; L-tryptophan biosynthesis; L-tryptophan from chorismate: step 5/5. In terms of biological role, the alpha subunit is responsible for the aldol cleavage of indoleglycerol phosphate to indole and glyceraldehyde 3-phosphate. The sequence is that of Tryptophan synthase alpha chain from Trichodesmium erythraeum (strain IMS101).